We begin with the raw amino-acid sequence, 190 residues long: MRTINSNQCVKIPKDIKASVKARVVTITGTRGTLKRSFKHLALDMYMPDKRTLKVEKWFGTKKELAAVRTVCSHIENMIKGVTFGFQYKMRAVYAHFPINCVTSENNTVIEIRNFLGEKYIRRVEMAPGVTVVNSTAQKDELIVEGNDIESVSGSAALIQQSTTVKNKDIRKFLDGLYVSEKTTVVKLES.

The protein belongs to the universal ribosomal protein uL6 family.

The sequence is that of Large ribosomal subunit protein uL6 (RpL9) from Drosophila melanogaster (Fruit fly).